Reading from the N-terminus, the 363-residue chain is 3-isopropylmalate dehydrogenase (363 aa).

78-91 (GPKWEHLPPDQQPE) contacts NAD(+). Arg-99, Arg-109, Arg-138, and Asp-227 together coordinate substrate. Residues Asp-227, Asp-251, and Asp-255 each coordinate Mg(2+). 285–297 (GSAPDIAGKNIAN) contacts NAD(+).

This sequence belongs to the isocitrate and isopropylmalate dehydrogenases family. LeuB type 1 subfamily. As to quaternary structure, homodimer. Mg(2+) is required as a cofactor. The cofactor is Mn(2+).

It localises to the cytoplasm. The catalysed reaction is (2R,3S)-3-isopropylmalate + NAD(+) = 4-methyl-2-oxopentanoate + CO2 + NADH. The protein operates within amino-acid biosynthesis; L-leucine biosynthesis; L-leucine from 3-methyl-2-oxobutanoate: step 3/4. Its function is as follows. Catalyzes the oxidation of 3-carboxy-2-hydroxy-4-methylpentanoate (3-isopropylmalate) to 3-carboxy-4-methyl-2-oxopentanoate. The product decarboxylates to 4-methyl-2 oxopentanoate. This Shigella sonnei (strain Ss046) protein is 3-isopropylmalate dehydrogenase.